Here is a 121-residue protein sequence, read N- to C-terminus: Small ribosomal subunit protein uS13 (121 aa).

The tract at residues 94–121 is disordered; the sequence is RGLPVRGQSTKNNARTRKGPKRTVGAKR. Residues 107–121 are compositionally biased toward basic residues; sequence ARTRKGPKRTVGAKR.

It belongs to the universal ribosomal protein uS13 family. Part of the 30S ribosomal subunit. Forms a loose heterodimer with protein S19. Forms two bridges to the 50S subunit in the 70S ribosome.

In terms of biological role, located at the top of the head of the 30S subunit, it contacts several helices of the 16S rRNA. In the 70S ribosome it contacts the 23S rRNA (bridge B1a) and protein L5 of the 50S subunit (bridge B1b), connecting the 2 subunits; these bridges are implicated in subunit movement. Contacts the tRNAs in the A and P-sites. This chain is Small ribosomal subunit protein uS13, found in Natranaerobius thermophilus (strain ATCC BAA-1301 / DSM 18059 / JW/NM-WN-LF).